The following is a 277-amino-acid chain: Large ribosomal subunit protein uL2 (277 aa).

Disordered stretches follow at residues 1–55 and 217–277; these read MGIR…RHQG and KRPS…KKKR. Basic residues predominate over residues 37–55; the sequence is LHSKGGRNGHGRITARHQG.

This sequence belongs to the universal ribosomal protein uL2 family. Part of the 50S ribosomal subunit. Forms a bridge to the 30S subunit in the 70S ribosome.

Its function is as follows. One of the primary rRNA binding proteins. Required for association of the 30S and 50S subunits to form the 70S ribosome, for tRNA binding and peptide bond formation. It has been suggested to have peptidyltransferase activity; this is somewhat controversial. Makes several contacts with the 16S rRNA in the 70S ribosome. This Thermobifida fusca (strain YX) protein is Large ribosomal subunit protein uL2.